We begin with the raw amino-acid sequence, 56 residues long: Ferredoxin (56 aa).

4Fe-4S ferredoxin-type domains follow at residues 2–28 (AYKIADSCVSCGACASECPVNAISQGD) and 29–56 (SIFVIDADTCIDCGNCANVCPVGAPVQE). Residues Cys9, Cys12, Cys15, Cys19, Cys38, Cys41, Cys44, and Cys48 each contribute to the [4Fe-4S] cluster site.

The cofactor is [4Fe-4S] cluster.

Its function is as follows. Ferredoxins are iron-sulfur proteins that transfer electrons in a wide variety of metabolic reactions. This chain is Ferredoxin, found in Clostridium pasteurianum.